A 370-amino-acid chain; its full sequence is 2-aminoethylphosphonate--pyruvate transaminase (370 aa).

N6-(pyridoxal phosphate)lysine is present on K194.

Belongs to the class-V pyridoxal-phosphate-dependent aminotransferase family. PhnW subfamily. As to quaternary structure, homodimer. Pyridoxal 5'-phosphate is required as a cofactor.

It catalyses the reaction (2-aminoethyl)phosphonate + pyruvate = phosphonoacetaldehyde + L-alanine. Involved in phosphonate degradation. The protein is 2-aminoethylphosphonate--pyruvate transaminase of Paraburkholderia phymatum (strain DSM 17167 / CIP 108236 / LMG 21445 / STM815) (Burkholderia phymatum).